Reading from the N-terminus, the 115-residue chain is Salivary protein gSG6 (115 aa).

The N-terminal stretch at 1–28 is a signal peptide; sequence MAIRVELLLAMVLLPLLLLESVVPHAAA.

Female saliva (at protein level). Distal-lateral lobes of female salivary gland (at protein level). Not detected in male salivary gland (at protein level).

The protein resides in the secreted. Required for efficient probing and blood feeding. The sequence is that of Salivary protein gSG6 from Anopheles gambiae (African malaria mosquito).